The primary structure comprises 1097 residues: Mitochondrial distribution and morphology protein 34 (1097 aa).

Residues 1–198 (MSFNFKWPTF…LPGIIHRLSQ (198 aa)) form the SMP-LTD domain. 8 disordered regions span residues 204-305 (EAKS…PLHS), 317-343 (AAFP…SGFS), 390-427 (QSDD…LDAV), 480-520 (DDQP…TSSL), 556-600 (PEVD…SSRT), 645-675 (LDAE…RDLS), 716-817 (GQNA…SPGV), and 923-1097 (GSSA…AIRE). Over residues 205–229 (AKSEKDKVKQKAEAEEPPARSREPT) the composition is skewed to basic and acidic residues. The segment covering 252–263 (RKSHSKAKKHSR) has biased composition (basic residues). Low complexity predominate over residues 274-283 (SPCQSPQRPR). A compositionally biased stretch (basic residues) spans 284 to 293 (QSPRRPRHVA). Residues 406-416 (SSSHDGKHDEG) show a composition bias toward basic and acidic residues. Low complexity-rich tracts occupy residues 508–519 (SSRSDRSACTSS) and 572–586 (GGTP…RFGS). The span at 662–675 (TNPTSRESSYRDLS) shows a compositional bias: polar residues. A compositionally biased stretch (low complexity) spans 759 to 779 (GMSATPARTRASAAASARSRP). The segment covering 784–796 (YATSPPGDSSGWQ) has biased composition (polar residues). Positions 923–943 (GSSAASGTGTTSGSSQTGANA) are enriched in low complexity. Polar residues predominate over residues 1004–1024 (SNKPNNTSTGQGEDSQDNSAA). Over residues 1045–1059 (ASGSSASSAITDSSS) the composition is skewed to low complexity.

This sequence belongs to the MDM34 family. As to quaternary structure, component of the ER-mitochondria encounter structure (ERMES) or MDM complex, composed of MMM1, MDM10, MDM12 and MDM34.

Its subcellular location is the mitochondrion outer membrane. Its function is as follows. Component of the ERMES/MDM complex, which serves as a molecular tether to connect the endoplasmic reticulum (ER) and mitochondria. Components of this complex are involved in the control of mitochondrial shape and protein biogenesis, and function in nonvesicular lipid trafficking between the ER and mitochondria. MDM34 is required for the interaction of the ER-resident membrane protein MMM1 and the outer mitochondrial membrane-resident beta-barrel protein MDM10. The sequence is that of Mitochondrial distribution and morphology protein 34 from Mycosarcoma maydis (Corn smut fungus).